Here is a 186-residue protein sequence, read N- to C-terminus: Mating-type-like protein ALPHA2 (186 aa).

The segment at residues 108 to 170 (ASYRGHRFTR…NRRRKQKSIY (63 aa)) is a DNA-binding region (homeobox; TALE-type).

Belongs to the TALE/M-ATYP homeobox family.

Its subcellular location is the nucleus. In terms of biological role, mating type proteins are sequence specific DNA-binding proteins that act as master switches in yeast differentiation by controlling gene expression in a cell type-specific fashion. The polypeptide is Mating-type-like protein ALPHA2 (MTL1ALPHA2) (Candida glabrata (strain ATCC 2001 / BCRC 20586 / JCM 3761 / NBRC 0622 / NRRL Y-65 / CBS 138) (Yeast)).